Reading from the N-terminus, the 270-residue chain is Phospholysine phosphohistidine inorganic pyrophosphate phosphatase (270 aa).

Mg(2+) is bound by residues Asp14 and Ser16. Substrate contacts are provided by residues 14–16, 52–53, and Lys187; these read DVS and TN. Asp212 is a binding site for Mg(2+).

It belongs to the HAD-like hydrolase superfamily. Requires Mg(2+) as cofactor.

It localises to the cytoplasm. It is found in the nucleus. It carries out the reaction diphosphate + H2O = 2 phosphate + H(+). In terms of biological role, phosphatase that hydrolyzes imidodiphosphate, 3-phosphohistidine and 6-phospholysine. Has broad substrate specificity and can also hydrolyze inorganic diphosphate, but with lower efficiency. The polypeptide is Phospholysine phosphohistidine inorganic pyrophosphate phosphatase (lhpp) (Xenopus laevis (African clawed frog)).